The primary structure comprises 257 residues: Na(+)-translocating NADH-quinone reductase subunit C (257 aa).

Residues 13-33 (LTVVVLLSLICSLIVASAAVL) form a helical membrane-spanning segment. Position 224 is an FMN phosphoryl threonine (Thr-224).

The protein belongs to the NqrC family. Composed of six subunits; NqrA, NqrB, NqrC, NqrD, NqrE and NqrF. The cofactor is FMN.

It localises to the cell inner membrane. The enzyme catalyses a ubiquinone + n Na(+)(in) + NADH + H(+) = a ubiquinol + n Na(+)(out) + NAD(+). NQR complex catalyzes the reduction of ubiquinone-1 to ubiquinol by two successive reactions, coupled with the transport of Na(+) ions from the cytoplasm to the periplasm. NqrA to NqrE are probably involved in the second step, the conversion of ubisemiquinone to ubiquinol. The chain is Na(+)-translocating NADH-quinone reductase subunit C from Haemophilus ducreyi (strain 35000HP / ATCC 700724).